The chain runs to 239 residues: Ubiquinone biosynthesis O-methyltransferase (239 aa).

Residues R44, G63, D84, and M128 each coordinate S-adenosyl-L-methionine.

The protein belongs to the methyltransferase superfamily. UbiG/COQ3 family.

The enzyme catalyses a 3-demethylubiquinol + S-adenosyl-L-methionine = a ubiquinol + S-adenosyl-L-homocysteine + H(+). It catalyses the reaction a 3-(all-trans-polyprenyl)benzene-1,2-diol + S-adenosyl-L-methionine = a 2-methoxy-6-(all-trans-polyprenyl)phenol + S-adenosyl-L-homocysteine + H(+). Its pathway is cofactor biosynthesis; ubiquinone biosynthesis. O-methyltransferase that catalyzes the 2 O-methylation steps in the ubiquinone biosynthetic pathway. The chain is Ubiquinone biosynthesis O-methyltransferase from Xanthomonas campestris pv. campestris (strain 8004).